A 681-amino-acid polypeptide reads, in one-letter code: Nucleolar GTP-binding protein 1 (681 aa).

An OBG-type G domain is found at 170-341 (RTLILCGFPN…LRDRACDELL (172 aa)). GTP contacts are provided by residues 176–183 (GFPNVGKS), 222–226 (DTPGI), and 290–293 (NKVD).

The protein belongs to the TRAFAC class OBG-HflX-like GTPase superfamily. OBG GTPase family. NOG subfamily. As to expression, ubiquitously expressed.

Its subcellular location is the nucleus. It is found in the nucleolus. Functionally, involved in the biogenesis of the 60S ribosomal subunit. Has a role in regulating longevity, growth and brood size. May regulate fat storage via the insulin/IGF pathway. This Caenorhabditis elegans protein is Nucleolar GTP-binding protein 1.